The sequence spans 355 residues: Protein-glutamate methylesterase/protein-glutamine glutaminase (355 aa).

The region spanning 4 to 121 is the Response regulatory domain; sequence KVLIIDDSAL…ANGMHEYSEM (118 aa). D55 is subject to 4-aspartylphosphate. The CheB-type methylesterase domain maps to 156–348; it reads LISSEKLIII…GRVLQYLAAN (193 aa). Active-site residues include S168, H194, and D290.

Belongs to the CheB family. Phosphorylated by CheA. Phosphorylation of the N-terminal regulatory domain activates the methylesterase activity.

It localises to the cytoplasm. It carries out the reaction [protein]-L-glutamate 5-O-methyl ester + H2O = L-glutamyl-[protein] + methanol + H(+). The enzyme catalyses L-glutaminyl-[protein] + H2O = L-glutamyl-[protein] + NH4(+). Functionally, involved in chemotaxis. Part of a chemotaxis signal transduction system that modulates chemotaxis in response to various stimuli. Catalyzes the demethylation of specific methylglutamate residues introduced into the chemoreceptors (methyl-accepting chemotaxis proteins or MCP) by CheR. Also mediates the irreversible deamidation of specific glutamine residues to glutamic acid. The sequence is that of Protein-glutamate methylesterase/protein-glutamine glutaminase from Methylobacillus flagellatus (strain ATCC 51484 / DSM 6875 / VKM B-1610 / KT).